A 175-amino-acid chain; its full sequence is Disulfide bond formation protein B (175 aa).

The Cytoplasmic segment spans residues 1 to 13 (MTALTRFAHSRSS). A helical transmembrane segment spans residues 14–30 (WFLLTGTAIGLEAAALY). Residues 31 to 48 (FQYVMKLDPCVMCIYQRL) are Periplasmic-facing. Residues C40 and C43 are joined by a disulfide bond. The chain crosses the membrane as a helical span at residues 49 to 64 (AVFGILVAGLIGMTAP). Over 65 to 71 (KYRLIRI) the chain is Cytoplasmic. The helical transmembrane segment at 72–89 (LGASCWAVSATWGLKLAL) threads the bilayer. The Periplasmic segment spans residues 90–144 (ALVNMQNNPSPFATCSFLPEFPTWMPLHEWFPAVMLPTGMCTDLPWRFMDVTMAE). The cysteines at positions 104 and 130 are disulfide-linked. A helical membrane pass occupies residues 145 to 163 (WMVVVFSTFLVIWLLFIVP). At 164–175 (ILSGSTKPSLYK) the chain is on the cytoplasmic side.

It belongs to the DsbB family.

The protein localises to the cell inner membrane. Required for disulfide bond formation in some periplasmic proteins. Acts by oxidizing the DsbA protein. This chain is Disulfide bond formation protein B, found in Shewanella sp. (strain W3-18-1).